Here is a 512-residue protein sequence, read N- to C-terminus: 2,3-bisphosphoglycerate-independent phosphoglycerate mutase (512 aa).

Mn(2+) contacts are provided by D14 and S64. S64 acts as the Phosphoserine intermediate in catalysis. Substrate contacts are provided by residues H125, 155–156, R187, R193, 259–262, and K332; these read RD and RADR. Positions 399, 403, 440, 441, and 459 each coordinate Mn(2+).

This sequence belongs to the BPG-independent phosphoglycerate mutase family. As to quaternary structure, monomer. Mn(2+) is required as a cofactor.

It catalyses the reaction (2R)-2-phosphoglycerate = (2R)-3-phosphoglycerate. Its pathway is carbohydrate degradation; glycolysis; pyruvate from D-glyceraldehyde 3-phosphate: step 3/5. Functionally, catalyzes the interconversion of 2-phosphoglycerate and 3-phosphoglycerate. The chain is 2,3-bisphosphoglycerate-independent phosphoglycerate mutase from Vesicomyosocius okutanii subsp. Calyptogena okutanii (strain HA).